The chain runs to 245 residues: Isopentenyl phosphate kinase (245 aa).

Residue K5–S9 participates in ATP binding. G45 serves as a coordination point for substrate. G46 serves as a coordination point for ATP. Substrate is bound by residues H50 and G143. ATP-binding positions include D164, Y169–K174, G201, and K205.

The protein belongs to the isopentenyl phosphate kinase family. Homodimer.

It catalyses the reaction isopentenyl phosphate + ATP = isopentenyl diphosphate + ADP. In terms of biological role, catalyzes the formation of isopentenyl diphosphate (IPP), the building block of all isoprenoids. Has lower activity with isopentenyl thiolophosphate (ISP). Has low activity with dimethylallyl phosphate (DMAP), 1-butyl phosphate (BP) and 3-buten-1-yl phosphate (BEP). Has no significant activity with geranyl phosphate (in vitro). The chain is Isopentenyl phosphate kinase from Thermoplasma acidophilum (strain ATCC 25905 / DSM 1728 / JCM 9062 / NBRC 15155 / AMRC-C165).